Here is a 208-residue protein sequence, read N- to C-terminus: uncharacterized protein (208 aa).

A compositionally biased stretch (low complexity) spans 118-134; it reads QYPNQYQQQPQQQQPGY. The segment at 118 to 208 is disordered; that stretch reads QYPNQYQQQP…HKKEKNEIKE (91 aa). Residues 138 to 175 are compositionally biased toward polar residues; that stretch reads NYNQPPVQLNKQAYDNYQQNDYKSNNQPNLAKENNISN. Basic residues predominate over residues 187 to 201; the sequence is KKEKKHSFFSKLHKK.

This is an uncharacterized protein from Dictyostelium discoideum (Social amoeba).